The following is a 560-amino-acid chain: Putative transport protein VFMJ11_0927 (560 aa).

Transmembrane regions (helical) follow at residues 8-28, 37-57, 66-86, 94-114, and 161-181; these read LLSQNDILLLFVVLALGLFIA, LGSSIGVLITALFMGSLGYTF, FMLFIFCVGIEAGPNFFGIFL, LLVLVVLVSAVSLSFLTGHYF, and NLSVGYAFSYLIGLTSLILLA. RCK C-terminal domains follow at residues 203-292 and 293-376; these read RGIG…FRNG and KEVF…KIGF. A run of 5 helical transmembrane segments spans residues 386-406, 409-429, 451-471, 478-498, and 539-559; these read LLAFCSFFILGIMFGMITMSF, VTFGLGNAVGLLISGITLGFL, GLLVFMVGIGLSAGGNINEYF, VLAAAFIVSVIPVILAYLVGA, and AGTYAIANILMTVAGTIMILL.

Belongs to the AAE transporter (TC 2.A.81) family. YbjL subfamily.

Its subcellular location is the cell membrane. In Aliivibrio fischeri (strain MJ11) (Vibrio fischeri), this protein is Putative transport protein VFMJ11_0927.